The sequence spans 304 residues: Neurexophilin-4 (304 aa).

The first 23 residues, 1 to 23 (MRLLPEWLLLLFGPWLLRKVISG), serve as a signal peptide directing secretion. The II stretch occupies residues 24 to 84 (QIVESGRPQY…GALARPGAAG (61 aa)). Residues asparagine 72, asparagine 133, asparagine 143, and asparagine 149 are each glycosylated (N-linked (GlcNAc...) asparagine). The tract at residues 85–163 (GPPVPRTKRK…IVPPSKRVEF (79 aa)) is III. Positions 164-220 (GGVWLPGPAPHPLQSTLALEGVLPGLGPPLGMAGQGLGGNLGGALAGPLGGALGVPG) are IV (linker domain). Residues 221 to 304 (AKESRAFNCH…NFQSEHPYFG (84 aa)) form a v (Cys-rich) region.

The protein belongs to the neurexophilin family. May be proteolytically processed in neuron-like cells. In terms of tissue distribution, brain and kidney.

It localises to the secreted. In terms of biological role, may be signaling molecules that resemble neuropeptides and that act by binding to alpha-neurexins and possibly other receptors. This is Neurexophilin-4 (Nxph4) from Rattus norvegicus (Rat).